We begin with the raw amino-acid sequence, 183 residues long: Shikimate kinase (183 aa).

25–30 lines the ATP pocket; sequence GAGKTT. Thr-29 contributes to the Mg(2+) binding site. Positions 47, 71, and 93 each coordinate substrate. Arg-131 is an ATP binding site. Arg-150 lines the substrate pocket.

Belongs to the shikimate kinase family. Monomer. Mg(2+) serves as cofactor.

It localises to the cytoplasm. It carries out the reaction shikimate + ATP = 3-phosphoshikimate + ADP + H(+). The protein operates within metabolic intermediate biosynthesis; chorismate biosynthesis; chorismate from D-erythrose 4-phosphate and phosphoenolpyruvate: step 5/7. Its function is as follows. Catalyzes the specific phosphorylation of the 3-hydroxyl group of shikimic acid using ATP as a cosubstrate. This is Shikimate kinase from Dechloromonas aromatica (strain RCB).